A 542-amino-acid polypeptide reads, in one-letter code: TNF receptor-associated factor 6 (542 aa).

Residues 1–374 (MSLLHCENSC…EAQQCNGIYI (374 aa)) form an interaction with TAX1BP1 region. Residues 71-110 (CPICLMALREAVQTPCGHRFCKACIIKSIRDAGHKCPVDN) form an RING-type; degenerate zinc finger. A Glycyl lysine isopeptide (Lys-Gly) (interchain with G-Cter in SUMO); alternate cross-link involves residue K125. A Glycyl lysine isopeptide (Lys-Gly) (interchain with G-Cter in ubiquitin); alternate cross-link involves residue K125. K143 is covalently cross-linked (Glycyl lysine isopeptide (Lys-Gly) (interchain with G-Cter in SUMO)). 2 TRAF-type zinc fingers span residues 151–203 (EHQA…EDKE) and 204–260 (IHEQ…NHLA). A coiled-coil region spans residues 310 to 368 (SEVHNFQETIQQLEGRLVRQDHQIRELTAKMETQSMYVNELKRTIRTLEDKVAEIEAQQ). A Glycyl lysine isopeptide (Lys-Gly) (interchain with G-Cter in ubiquitin) cross-link involves residue K339. Residues 370-519 (NGIYIWKIGN…DDTLLVRCEV (150 aa)) form the MATH domain. The segment at 375–542 (WKIGNFGMHL…FQPRSTDSGI (168 aa)) is interaction with TANK. K473 participates in a covalent cross-link: Glycyl lysine isopeptide (Lys-Gly) (interchain with G-Cter in SUMO).

This sequence belongs to the TNF receptor-associated factor family. A subfamily. As to quaternary structure, homotrimer. Homooligomer. N-terminal region is dimeric while C-terminal region is trimeric; maybe providing a mode of oligomerization. Upon IL1B treatment, forms a complex with PELI1, IRAK1, IRAK4 and MYD88; this complex recruits MAP3K7/TAK1, TAB1 and TAB2 to mediate NF-kappa-B activation. Direct binding of SMAD6 to PELI1 prevents the complex formation and hence negatively regulates IL1R-TLR signaling and eventually NF-kappa-B-mediated gene expression. Binds to TNFRSF5/CD40 and TNFRSF11A/RANK. Associates with NGFR, TNFRSF17, IRAK2, IRAK3, RIPK2, MAP3K1, MAP3K5, MAP3K14, CSK, TRAF, TRAF-interacting protein TRIP and TNF receptor associated protein TDP2. Interacts with IL17R. Interacts with SQSTM1 bridging NTRK1 and NGFR. Forms a ternary complex with SQSTM1 and PRKCZ. Interacts with PELI2 and PELI3. Binds UBE2V1. Interacts with TAX1BP1; this interaction mediates deubiquitination of TRAF6 and inhibition of NF-kappa-B activation. Interacts with ZNF675. Interacts with ARRB1 and ARRB2. Interacts with MAP3K7 and TAB1/MAP3K7IP1; during IL-1 signaling. Interacts with UBE2N. Interacts with TGFBR1, HDAC1 and RANGAP1. Interacts with AKT1, AKT2 and AKT3. Interacts (via TRAF domains) with NUMBL (via C-terminal). Interacts with RBCK1. Interacts with LIMD1 (via LIM domains). Interacts with RSAD2/viperin. Interacts (via C-terminus) with EIF2AK2/PKR (via the kinase catalytic domain). Interacts with ZFAND5. Interacts with IL1RL1. Interacts with TRAFD1. Interacts with AJUBA. Interacts with MAVS/IPS1. Interacts (via TRAF domains) with DYNC2I2 (via WD domains). Interacts with IFIT3 (via N-terminus). Interacts with TICAM2. Interacts with CARD14. Interacts with CD40 and MAP3K8; the interaction is required for ERK activation. Interacts with TICAM1 and this interaction is enhanced in the presence of WDFY1. Interacts with TANK; this interaction increases in response to DNA damage. Interacts with USP10; this interaction increases in response to DNA damage. Interacts with ZC3H12A; this interaction increases in response to DNA damage and is stimulated by TANK. Interacts with WDFY3. Interacts with TRIM13. Interacts with GPS2. Interacts (via C-terminus) with SASH1. Interacts with LRRC19. Interacts with IL17RA and TRAF3IP2. Interacts with TOMM70. Interacts with AMBRA1; interaction is required to mediate 'Lys-63'-linked ubiquitination of ULK1. Interacts with CRBN; this interaction inhibits TLR4-mediated signaling by preventing TRAF6-mediated ubiquitination of ECSIT. Sumoylated on Lys-125, Lys-143 and Lys-473 with SUMO1. Post-translationally, polyubiquitinated on Lys-125 by TRAF3IP2; after cell stimulation with IL17A. Polyubiquitinated on Lys-125; after cell stimulation with IL1B or TGFB. This ligand-induced cell stimulation leads to dimerization/oligomerization of TRAF6 molecules, followed by auto-ubiquitination which involves UBE2N and UBE2V1 and leads to TRAF6 activation. This 'Lys-63' site-specific poly-ubiquitination appears to be associated with the activation of signaling molecules. Endogenous autoubiquitination occurs only for the cytoplasmic form. Deubiquitinated by USP10 in a TANK-dependent manner, leading to the negative regulation of NF-kappa-B signaling upon DNA damage. LRRC19 induces 'Lys-63' ubiquitination. Ubiquitinated at Lys-339 by the SCF(FBXL2) complex, leading to its degradation by the proteasome.

Its subcellular location is the cytoplasm. It localises to the cell cortex. The protein resides in the nucleus. The protein localises to the lipid droplet. The catalysed reaction is S-ubiquitinyl-[E2 ubiquitin-conjugating enzyme]-L-cysteine + [acceptor protein]-L-lysine = [E2 ubiquitin-conjugating enzyme]-L-cysteine + N(6)-ubiquitinyl-[acceptor protein]-L-lysine.. It functions in the pathway protein modification; protein ubiquitination. Functionally, E3 ubiquitin ligase that, together with UBE2N and UBE2V1, mediates the synthesis of 'Lys-63'-linked-polyubiquitin chains conjugated to proteins, such as ECSIT, IKBKG, IRAK1, AKT1 and AKT2. Also mediates ubiquitination of free/unanchored polyubiquitin chain that leads to MAP3K7 activation. Leads to the activation of NF-kappa-B and JUN. Seems to also play a role in dendritic cells (DCs) maturation and/or activation. Represses c-Myb-mediated transactivation, in B-lymphocytes. Adapter protein that seems to play a role in signal transduction initiated via TNF receptor, IL-1 receptor and IL-17 receptor. Regulates osteoclast differentiation by mediating the activation of adapter protein complex 1 (AP-1) and NF-kappa-B, in response to RANK-L stimulation. Together with MAP3K8, mediates CD40 signals that activate ERK in B-cells and macrophages, and thus may play a role in the regulation of immunoglobulin production. Acts as a regulator of the JNK and NF-kappa-B signaling pathways by initiating assembly of heterotypic 'Lys-63'-/'Lys-48'-linked branched ubiquitin chains that are then recognized by TAB2: TRAF6 catalyzes initial 'Lys-63'-linked-polyubiquitin chains that are then branched via 'Lys-48'-linked polyubiquitin by HUWE1. 'Lys-63'-/'Lys-48'-linked branched ubiquitin chains protect 'Lys-63'-linkages from CYLD deubiquitination. Also participates in the TCR signaling by ubiquitinating LAT. The polypeptide is TNF receptor-associated factor 6 (TRAF6) (Bos taurus (Bovine)).